Consider the following 122-residue polypeptide: Large ribosomal subunit protein uL14 (122 aa).

Belongs to the universal ribosomal protein uL14 family. Part of the 50S ribosomal subunit. Forms a cluster with proteins L3 and L19. In the 70S ribosome, L14 and L19 interact and together make contacts with the 16S rRNA in bridges B5 and B8.

Functionally, binds to 23S rRNA. Forms part of two intersubunit bridges in the 70S ribosome. The polypeptide is Large ribosomal subunit protein uL14 (Bifidobacterium adolescentis (strain ATCC 15703 / DSM 20083 / NCTC 11814 / E194a)).